We begin with the raw amino-acid sequence, 254 residues long: Bowman-Birk type bran trypsin inhibitor (254 aa).

Positions 1–22 (MSNTTMATSTILLFLLAGLAAA) are cleaved as a signal peptide. The propeptide occupies 23 to 118 (HGDGDTTIRL…KCTAALDGLS (96 aa)). 3 repeats span residues 46-120 (KPWD…LSME), 121-187 (RPWK…FCTP), and 188-251 (RPWG…CKPR). 9 cysteine pairs are disulfide-bonded: C125-C185, C126-C143, C152-C159, C156-C172, C193-C248, C194-C209, C199-C207, C216-C223, and C220-C236. A propeptide spanning residues 252 to 254 (AEN) is cleaved from the precursor.

The protein belongs to the Bowman-Birk serine protease inhibitor family.

This Oryza sativa subsp. japonica (Rice) protein is Bowman-Birk type bran trypsin inhibitor (RBBI3.3).